The following is a 229-amino-acid chain: Large ribosomal subunit protein uL1 (229 aa).

This sequence belongs to the universal ribosomal protein uL1 family. Part of the 50S ribosomal subunit.

Binds directly to 23S rRNA. The L1 stalk is quite mobile in the ribosome, and is involved in E site tRNA release. Functionally, protein L1 is also a translational repressor protein, it controls the translation of the L11 operon by binding to its mRNA. The sequence is that of Large ribosomal subunit protein uL1 from Caulobacter sp. (strain K31).